We begin with the raw amino-acid sequence, 92 residues long: UPF0237 protein MM_0082 (92 aa).

The region spanning 7 to 81 (IITVIGSDRV…KSLGVEVKVQ (75 aa)) is the ACT domain.

It belongs to the UPF0237 family.

The chain is UPF0237 protein MM_0082 from Methanosarcina mazei (strain ATCC BAA-159 / DSM 3647 / Goe1 / Go1 / JCM 11833 / OCM 88) (Methanosarcina frisia).